The following is a 124-amino-acid chain: Conotoxin Cl14.12 (124 aa).

The N-terminal stretch at 1–17 (MKVAVVLLVSLLAVTYA) is a signal peptide. Positions 18-74 (LPEKRIFFGGIVDKVKDTFTKIFNKAKETFDKITDGFDVDFDEVVDKLIAQIHSTPT) are excised as a propeptide.

Contains 2 disulfide bond. Expressed by the venom duct.

Its subcellular location is the secreted. The protein is Conotoxin Cl14.12 of Californiconus californicus (California cone).